The following is a 481-amino-acid chain: UDP-glycosyltransferase 85C2 (481 aa).

His23 serves as the catalytic Proton acceptor. Residue His23 participates in an anthocyanidin binding. Asp120 functions as the Charge relay in the catalytic mechanism. Residues Thr143, Gln362, His377, Trp380, Ser382, Glu385, Asp401, and Gln402 each contribute to the UDP-alpha-D-glucose site.

Belongs to the UDP-glycosyltransferase family.

The catalysed reaction is steviol + UDP-alpha-D-glucose = steviolmonoside + UDP + H(+). It catalyses the reaction steviolmonoside + UDP-alpha-D-glucose = rubusoside + UDP. Functionally, involved in the biosynthesis of steviol glycosides in leaves. Converts steviol to the mono-glycoside steviolmonoside. Converts the mono-glycoside steviolmonoside to the bi-glycoside rubusoside. The protein is UDP-glycosyltransferase 85C2 of Stevia rebaudiana (Stevia).